Reading from the N-terminus, the 659-residue chain is Ion-translocating oxidoreductase complex subunit C (659 aa).

4Fe-4S ferredoxin-type domains lie at threonine 366–tyrosine 397 and lysine 407–tyrosine 436. Residues cysteine 377, cysteine 380, cysteine 383, cysteine 387, cysteine 416, cysteine 419, cysteine 422, and cysteine 426 each contribute to the [4Fe-4S] cluster site.

Belongs to the 4Fe4S bacterial-type ferredoxin family. RnfC subfamily. The complex is composed of six subunits: RnfA, RnfB, RnfC, RnfD, RnfE and RnfG. The cofactor is [4Fe-4S] cluster.

It localises to the cell inner membrane. Part of a membrane-bound complex that couples electron transfer with translocation of ions across the membrane. The sequence is that of Ion-translocating oxidoreductase complex subunit C from Yersinia pseudotuberculosis serotype IB (strain PB1/+).